The chain runs to 33 residues: Cecropin-C (33 aa).

The residue at position 21 (K21) is a 5-hydroxylysine.

Monomer. Hemolymph.

It is found in the secreted. Functionally, cecropins have lytic and antibacterial activity against several Gram-positive and Gram-negative bacteria. Also has activity against fungi. This is Cecropin-C from Heliothis virescens (Tobacco budworm moth).